We begin with the raw amino-acid sequence, 319 residues long: MLNKITAVLQFGLNASLLLAYLIVFVLSIMGVIDSRYAFLLEIEGKQSVINLSIPIMLAFGMWILFYMFYFIWKIIVWTKNRSSSSNTNVNFNAKENFYVAITCIMVNVITGLCWMLFAAFQIYVFKNGHLPALDVLYRHYDLESMCWNSIVYLEIDYANTETLSQNCVYVNIYKKCIMCRAIVSDHEPTVFNQNYPVIIMGVLTILAVQCWNLYVQLKEMRHNIYMKRRAEAEKASYEHYCDIDYRREERESNSRLLEVVSEGRNSSSVVAVTHPPSTTSTTTSVSETLSSFIAPSDLSSQPSPSSHPSSPFGNHNEF.

Residues 268–312 (SSVVAVTHPPSTTSTTTSVSETLSSFIAPSDLSSQPSPSSHPSSP) are compositionally biased toward low complexity. The disordered stretch occupies residues 268–319 (SSVVAVTHPPSTTSTTTSVSETLSSFIAPSDLSSQPSPSSHPSSPFGNHNEF).

This is an uncharacterized protein from Lepidoptera (butterflies and moths).